Consider the following 152-residue polypeptide: Melatonin receptor type 1B (152 aa).

Topologically, residues 1–12 (HSFVYEKLFSLW) are cytoplasmic. The chain crosses the membrane as a helical span at residues 13-33 (NTILYVCLIWTLTVVATVPNF). Topologically, residues 34–57 (FVGSLEYDPRIYSCTFVQTVSSSY) are extracellular. Residues 58–78 (TITVVVIHFILPITVVTFCYL) traverse the membrane as a helical segment. Over 79–110 (RIWILVIQVRRKVKSEFKPRMKQSDFRNFLTM) the chain is Cytoplasmic. The chain crosses the membrane as a helical span at residues 111-131 (FVVFVIFAFCWAPLNFIGLAV). Topologically, residues 132 to 144 (SINPTEVAPKIPE) are extracellular. A helical transmembrane segment spans residues 145-152 (WLFVVSYF).

The protein belongs to the G-protein coupled receptor 1 family.

It localises to the cell membrane. High affinity receptor for melatonin. The activity of this receptor is mediated by pertussis toxin sensitive G proteins that inhibits adenylate cyclase activity. This is Melatonin receptor type 1B (mtnr1b) from Xenopus laevis (African clawed frog).